We begin with the raw amino-acid sequence, 749 residues long: DNA topoisomerase 1 (749 aa).

The tract at residues 1–110 is disordered; that stretch reads MSDSEDVALS…PKKEDSVETD (110 aa). Over residues 62 to 75 the composition is skewed to basic and acidic residues; that stretch reads LSKEKVNNKVKDEL. The span at 79–94 shows a compositional bias: low complexity; it reads PVTPKKTPKISKTPVS. Residues 101-110 show a composition bias toward basic and acidic residues; it reads PKKEDSVETD. Interaction with DNA regions lie at residues 338 to 339, 401 to 406, and 493 to 495; these read KY, RAGGEK, and TAK. In terms of domain architecture, Topo IB-type catalytic spans 345 to 749; it reads NSSIKGISDM…IESTDENWRF (405 aa). The active-site O-(3'-phospho-DNA)-tyrosine intermediate is the Y707.

The protein belongs to the type IB topoisomerase family.

The protein localises to the nucleus. It localises to the nucleolus. Its subcellular location is the nucleoplasm. It catalyses the reaction ATP-independent breakage of single-stranded DNA, followed by passage and rejoining.. Functionally, releases the supercoiling and torsional tension of DNA introduced during the DNA replication and transcription by transiently cleaving and rejoining one strand of the DNA duplex. Introduces a single-strand break via transesterification at the specific target site 5'-[CT]CCTTp site in duplex DNA. The scissile phosphodiester is attacked by the catalytic tyrosine of the enzyme, resulting in the formation of a DNA-(3'-phosphotyrosyl)-enzyme intermediate and the expulsion of a 5'-OH DNA strand. The free DNA strand then undergoes passage around the unbroken strand thus removing DNA supercoils. Finally, in the religation step, the DNA 5'-OH attacks the covalent intermediate to expel the active-site tyrosine and restore the DNA phosphodiester backbone. The polypeptide is DNA topoisomerase 1 (TOP1) (Candidozyma auris (Yeast)).